Reading from the N-terminus, the 76-residue chain is ATP synthase subunit 9, mitochondrial (76 aa).

2 helical membrane passes run 14-34 (IATL…VALI) and 52-72 (ILGF…SFLL).

The protein belongs to the ATPase C chain family. In terms of assembly, F-type ATPases have 2 components, CF(1) - the catalytic core - and CF(0) - the membrane proton channel. CF(1) has five subunits: alpha(3), beta(3), gamma(1), delta(1), epsilon(1). CF(0) has three main subunits: a, b and c.

It localises to the mitochondrion membrane. Mitochondrial membrane ATP synthase (F(1)F(0) ATP synthase or Complex V) produces ATP from ADP in the presence of a proton gradient across the membrane which is generated by electron transport complexes of the respiratory chain. F-type ATPases consist of two structural domains, F(1) - containing the extramembraneous catalytic core and F(0) - containing the membrane proton channel, linked together by a central stalk and a peripheral stalk. During catalysis, ATP synthesis in the catalytic domain of F(1) is coupled via a rotary mechanism of the central stalk subunits to proton translocation. Part of the complex F(0) domain. A homomeric c-ring of probably 10 subunits is part of the complex rotary element. In Candida albicans (strain SC5314 / ATCC MYA-2876) (Yeast), this protein is ATP synthase subunit 9, mitochondrial (ATP9).